A 962-amino-acid polypeptide reads, in one-letter code: Translation initiation factor IF-2 (962 aa).

A disordered region spans residues 99-365; sequence VKAAQTQAAP…GKKGKKLKLE (267 aa). A compositionally biased stretch (basic and acidic residues) spans 117–141; that stretch reads DAAKARAEAAARAEARAKAEAEAAK. The segment covering 145–155 has biased composition (low complexity); sequence AKAGNKAKPAA. The span at 173 to 216 shows a compositional bias: basic and acidic residues; sequence KPAEESKAEKAQADKMPSKKPAEPKEKAAKPKHERNGKGKDAKK. Over residues 219–234 the composition is skewed to low complexity; it reads KPAAPAVPQPVVSAEE. The span at 235–269 shows a compositional bias: basic and acidic residues; that stretch reads QAQRDEEARRAAALRAHQEALLKEKQERQARREAM. The segment covering 270 to 283 has biased composition (low complexity); that stretch reads KQQAEQQAKAAQEA. A compositionally biased stretch (basic and acidic residues) spans 338 to 354; that stretch reads GGRDRNNARNGDDERVR. Positions 462–631 constitute a tr-type G domain; it reads PRPPVVTVMG…LLEAEVLELT (170 aa). The tract at residues 471–478 is G1; it reads GHVDHGKT. 471–478 is a GTP binding site; sequence GHVDHGKT. Positions 496 to 500 are G2; sequence GITQH. The interval 517 to 520 is G3; that stretch reads DTPG. GTP is bound by residues 517–521 and 571–574; these read DTPGH and NKID. The interval 571–574 is G4; sequence NKID. Residues 607-609 are G5; sequence SAK.

This sequence belongs to the TRAFAC class translation factor GTPase superfamily. Classic translation factor GTPase family. IF-2 subfamily.

The protein resides in the cytoplasm. One of the essential components for the initiation of protein synthesis. Protects formylmethionyl-tRNA from spontaneous hydrolysis and promotes its binding to the 30S ribosomal subunits. Also involved in the hydrolysis of GTP during the formation of the 70S ribosomal complex. This Neisseria meningitidis serogroup C (strain 053442) protein is Translation initiation factor IF-2.